Reading from the N-terminus, the 294-residue chain is MLDENEDIHPLFAGAPATTEFKKLRKRIVRYTREAIEQYGMVERRADGSTPKWLVCLSGGKDSYTLLAVLYELKWRGLLPVDLLACNLDQGQPGFPSTVLPEFLDRMGVPNRIEYQDTYSVVVDKVPQGRTYCALCSRLRRGNLYRIAREEGCSAVVLGHHRDDILETFFMNLFHGGRLATMPPKLVNEEGDLFVFRPLAHVAEADCEKFARAMNYPIIPCDLCGSQDGLQRQQVKQILDGWEKNRPGRRQVMFRALMNARPSHLLDPKLFDFQGLELGSREKGENFGEIPLLR.

Positions 58 to 63 match the PP-loop motif motif; sequence SGGKDS. Positions 133, 136, and 224 each coordinate [4Fe-4S] cluster.

Belongs to the TtcA family. Homodimer. Mg(2+) serves as cofactor. [4Fe-4S] cluster is required as a cofactor.

It is found in the cytoplasm. The enzyme catalyses cytidine(32) in tRNA + S-sulfanyl-L-cysteinyl-[cysteine desulfurase] + AH2 + ATP = 2-thiocytidine(32) in tRNA + L-cysteinyl-[cysteine desulfurase] + A + AMP + diphosphate + H(+). Its pathway is tRNA modification. Its function is as follows. Catalyzes the ATP-dependent 2-thiolation of cytidine in position 32 of tRNA, to form 2-thiocytidine (s(2)C32). The sulfur atoms are provided by the cysteine/cysteine desulfurase (IscS) system. The protein is tRNA-cytidine(32) 2-sulfurtransferase of Ruegeria pomeroyi (strain ATCC 700808 / DSM 15171 / DSS-3) (Silicibacter pomeroyi).